A 130-amino-acid chain; its full sequence is Histone H2A type 1-F (130 aa).

A disordered region spans residues 1–22 (MSGRGKQGGKARAKAKTRSSRA). Residue Ser2 is modified to Phosphoserine; by RPS6KA5. Position 4 is a citrulline; alternate (Arg4). Arg4 is modified (symmetric dimethylarginine; by PRMT5; alternate). Lys6 and Lys10 each carry N6-(2-hydroxyisobutyryl)lysine. A compositionally biased stretch (basic residues) spans 7-19 (QGGKARAKAKTRS). The residue at position 10 (Lys10) is an N6-lactoyllysine; alternate. The residue at position 37 (Lys37) is an N6-(2-hydroxyisobutyryl)lysine; alternate. Lys37 bears the N6-(beta-hydroxybutyryl)lysine; alternate mark. An N6-crotonyllysine; alternate modification is found at Lys37. N6-(2-hydroxyisobutyryl)lysine occurs at positions 75, 76, and 96. N6-glutaryllysine; alternate is present on Lys96. Gln105 is modified (N5-methylglutamine). Lys119 is modified (N6-(2-hydroxyisobutyryl)lysine; alternate). 2 positions are modified to N6-crotonyllysine; alternate: Lys119 and Lys120. N6-glutaryllysine; alternate occurs at positions 119 and 120. Residue Lys120 forms a Glycyl lysine isopeptide (Lys-Gly) (interchain with G-Cter in ubiquitin); alternate linkage. Thr121 bears the Phosphothreonine; by DCAF1 mark. N6-crotonyllysine; alternate is present on Lys126. At Lys126 the chain carries N6-glutaryllysine; alternate.

The protein belongs to the histone H2A family. In terms of assembly, the nucleosome is a histone octamer containing two molecules each of H2A, H2B, H3 and H4 assembled in one H3-H4 heterotetramer and two H2A-H2B heterodimers. The octamer wraps approximately 147 bp of DNA. Deiminated on Arg-4 in granulocytes upon calcium entry. Post-translationally, monoubiquitination of Lys-120 (H2AK119Ub) by RING1, TRIM37 and RNF2/RING2 complex gives a specific tag for epigenetic transcriptional repression and participates in X chromosome inactivation of female mammals. It is involved in the initiation of both imprinted and random X inactivation. Ubiquitinated H2A is enriched in inactive X chromosome chromatin. Ubiquitination of H2A functions downstream of methylation of 'Lys-27' of histone H3 (H3K27me). H2AK119Ub by RNF2/RING2 can also be induced by ultraviolet and may be involved in DNA repair. Following DNA double-strand breaks (DSBs), it is ubiquitinated through 'Lys-63' linkage of ubiquitin moieties by the E2 ligase UBE2N and the E3 ligases RNF8 and RNF168, leading to the recruitment of repair proteins to sites of DNA damage. Ubiquitination at Lys-14 and Lys-16 (H2AK13Ub and H2AK15Ub, respectively) in response to DNA damage is initiated by RNF168 that mediates monoubiquitination at these 2 sites, and 'Lys-63'-linked ubiquitin are then conjugated to monoubiquitin; RNF8 is able to extend 'Lys-63'-linked ubiquitin chains in vitro. H2AK119Ub and ionizing radiation-induced 'Lys-63'-linked ubiquitination (H2AK13Ub and H2AK15Ub) are distinct events. In terms of processing, phosphorylation on Ser-2 (H2AS1ph) is enhanced during mitosis. Phosphorylation on Ser-2 by RPS6KA5/MSK1 directly represses transcription. Acetylation of H3 inhibits Ser-2 phosphorylation by RPS6KA5/MSK1. Phosphorylation at Thr-121 (H2AT120ph) by DCAF1 is present in the regulatory region of many tumor suppresor genes and down-regulates their transcription. Symmetric dimethylation on Arg-4 by the PRDM1/PRMT5 complex may play a crucial role in the germ-cell lineage. Post-translationally, glutamine methylation at Gln-105 (H2AQ104me) by FBL is specifically dedicated to polymerase I. It is present at 35S ribosomal DNA locus and impairs binding of the FACT complex. In terms of processing, crotonylation (Kcr) is specifically present in male germ cells and marks testis-specific genes in post-meiotic cells, including X-linked genes that escape sex chromosome inactivation in haploid cells. Crotonylation marks active promoters and enhancers and confers resistance to transcriptional repressors. It is also associated with post-meiotically activated genes on autosomes. Lactylated in macrophages by EP300/P300 by using lactoyl-CoA directly derived from endogenous or exogenous lactate, leading to stimulates gene transcription.

Its subcellular location is the nucleus. It is found in the chromosome. Functionally, core component of nucleosome. Nucleosomes wrap and compact DNA into chromatin, limiting DNA accessibility to the cellular machineries which require DNA as a template. Histones thereby play a central role in transcription regulation, DNA repair, DNA replication and chromosomal stability. DNA accessibility is regulated via a complex set of post-translational modifications of histones, also called histone code, and nucleosome remodeling. In Rattus norvegicus (Rat), this protein is Histone H2A type 1-F.